The chain runs to 178 residues: uncharacterized protein (178 aa).

Residues 1 to 13 show a composition bias toward polar residues; it reads MEVASSSSACQFD. Disordered stretches follow at residues 1–24 and 47–114; these read MEVA…ELKP and WPSR…KKEK.

This is an uncharacterized protein from Caenorhabditis elegans.